Reading from the N-terminus, the 238-residue chain is Large ribosomal subunit protein uL2 (238 aa).

Residues 1 to 11 (MGKRLISQNRG) show a composition bias toward polar residues. Disordered stretches follow at residues 1–22 (MGKRLISQNRGRGTPTYRAPSH) and 202–223 (FGGGAWKHPGKPTTVSRNAPPG).

It belongs to the universal ribosomal protein uL2 family. In terms of assembly, part of the 50S ribosomal subunit. Forms a bridge to the 30S subunit in the 70S ribosome.

One of the primary rRNA binding proteins. Required for association of the 30S and 50S subunits to form the 70S ribosome, for tRNA binding and peptide bond formation. It has been suggested to have peptidyltransferase activity; this is somewhat controversial. Makes several contacts with the 16S rRNA in the 70S ribosome. The protein is Large ribosomal subunit protein uL2 of Methanosarcina acetivorans (strain ATCC 35395 / DSM 2834 / JCM 12185 / C2A).